Consider the following 170-residue polypeptide: MARVEL domain-containing protein 1 (170 aa).

The Cytoplasmic portion of the chain corresponds to 1–38; sequence MEGERPRSDTVTTTVSSHMETISLGGSIAYDRSFLRSP. The region spanning 34 to 167 is the MARVEL domain; sequence FLRSPTGVLL…STYFSFQAWR (134 aa). The chain crosses the membrane as a helical span at residues 39–59; the sequence is TGVLLLMEIMFGLLVWALIAG. Topologically, residues 60–67 are extracellular; it reads SEYFLFSA. The chain crosses the membrane as a helical span at residues 68-88; the sequence is FGWVMFVAVFYWVLSVFFFLL. Over 89-102 the chain is Cytoplasmic; that stretch reads HLTRANTRITKVPW. The helical transmembrane segment at 103–123 threads the bilayer; the sequence is SLVGLCFNGSAFVLYLIAAVV. Residues 124–145 are Extracellular-facing; the sequence is EASSVNKDVHQHHNYNSWTASS. Residues 146 to 166 form a helical membrane-spanning segment; it reads FFAFIVTVCYALSTYFSFQAW. Over 167-170 the chain is Cytoplasmic; sequence RTKS.

Its subcellular location is the membrane. It is found in the nucleus. This is MARVEL domain-containing protein 1 (marveld1) from Xenopus laevis (African clawed frog).